A 1358-amino-acid chain; its full sequence is Phosphoribosylformylglycinamidine synthase (1358 aa).

T2 carries the N-acetylthreonine modification. Residues 339 to 363 (AVSPFPGAATGSGGEIRDEGATGRG) are disordered. ATP is bound by residues 345-356 (GAATGSGGEIRD), 424-426 (NGY), and A719. Mg(2+) contacts are provided by D720, E762, N766, and D930. Residue S932 participates in ATP binding. The 266-residue stretch at 1093–1358 (VAILREQGVN…LFRSARRWVG (266 aa)) folds into the Glutamine amidotransferase type-1 domain. C1187 functions as the Nucleophile in the catalytic mechanism. Catalysis depends on residues H1319 and E1321.

In the N-terminal section; belongs to the FGAMS family.

The protein localises to the cytoplasm. The catalysed reaction is N(2)-formyl-N(1)-(5-phospho-beta-D-ribosyl)glycinamide + L-glutamine + ATP + H2O = 2-formamido-N(1)-(5-O-phospho-beta-D-ribosyl)acetamidine + L-glutamate + ADP + phosphate + H(+). It functions in the pathway purine metabolism; IMP biosynthesis via de novo pathway; 5-amino-1-(5-phospho-D-ribosyl)imidazole from N(2)-formyl-N(1)-(5-phospho-D-ribosyl)glycinamide: step 1/2. Functionally, phosphoribosylformylglycinamidine synthase involved in the purines biosynthetic pathway. Catalyzes the ATP-dependent conversion of formylglycinamide ribonucleotide (FGAR) and glutamine to yield formylglycinamidine ribonucleotide (FGAM) and glutamate. This is Phosphoribosylformylglycinamidine synthase (ADE6) from Saccharomyces cerevisiae (strain ATCC 204508 / S288c) (Baker's yeast).